We begin with the raw amino-acid sequence, 780 residues long: Protein AMEIOTIC 1 (780 aa).

Disordered regions lie at residues 32-60 (KKKT…SPLS) and 237-327 (APKE…RWSA). The span at 50 to 60 (DSTIQPRSPLS) shows a compositional bias: polar residues. 2 stretches are compositionally biased toward basic and acidic residues: residues 263–291 (EVKR…EGKK) and 309–327 (RTVE…RWSA). The stretch at 448–547 (VEELTEEVNG…LEEQVTYLSS (100 aa)) forms a coiled coil.

It is found in the nucleus. Its subcellular location is the chromosome. In terms of biological role, plays a fundamental role in building the proper chromosome structure at the beginning of meiosis in male meiocytes. Required for the transition from leptotene to zygotene in meiocytes. Required for homologous chromosome pairing, and initiation and progression of meiotic recombination. Regulates meiocyte cytoskeleton organization. This chain is Protein AMEIOTIC 1, found in Zea mays (Maize).